The sequence spans 325 residues: MCSNSNCYVPFFNWYWPFCGVLAIIFQTILLHLISHKSPATLDGLKIFLYNTSCVQIALITFAFLSQHRLLTNSISAAVLSLGPCSYVSPTTCFINYHVFMATSFGAGSAIAITVLFRFFVLVQNQVHTNQTYIMVLASYIAPLVVLIIPFTDKWDFESAQASTALEHPSYNLSIYYPYSGFSNAGSPQFLSATLLLSIGAYGIPIGCLILTRKVLILIRYHSHMSERTKKQAQTLIHGLIVQSMLPFISYIPSFSGYIYTQSTGRELLICEHLILVSSAFPALLDPFISFYFIVPYRQAIIEWVLPKRQQRITTVTSNSTSGFN.

8 helical membrane passes run 14-34, 45-65, 75-95, 97-117, 132-152, 190-210, 235-255, and 275-295; these read WYWP…LHLI, LKIF…FAFL, ISAA…TCFI, YHVF…TVLF, TYIM…IPFT, FLSA…GCLI, TLIH…IPSF, and ILVS…YFIV.

It belongs to the nematode receptor-like protein srd family.

The protein localises to the membrane. This chain is Serpentine receptor class delta-59 (srd-59), found in Caenorhabditis elegans.